A 723-amino-acid polypeptide reads, in one-letter code: Transmembrane channel-like protein 7 (723 aa).

Residues 1–21 (MSESSASALQLGRPSRQPAVH) form a disordered region. Residues 1 to 168 (MSESSASALQ…GIQSYFSFLR (168 aa)) lie on the Extracellular side of the membrane. Asparagine 24 is a glycosylation site (N-linked (GlcNAc...) asparagine). The tract at residues 51–70 (RRRTTVHSRDKQSGTLLKST) is disordered. Asparagine 84 carries an N-linked (GlcNAc...) asparagine glycan. Serine 89 carries the post-translational modification Phosphoserine. N-linked (GlcNAc...) asparagine glycosylation is present at asparagine 96. Residues 169–189 (FLVLLNLVIFLIIFMLVLLPI) traverse the membrane as a helical segment. The Cytoplasmic segment spans residues 190–219 (LLTKYKITNSSFVLIPFKDTDIQCTVYPVS). A helical transmembrane segment spans residues 220 to 240 (SSGLIYFYSYIIDLLSGTGFL). At 241 to 263 (EETSLFYGHYTIDGVKFQNFTYD) the chain is on the extracellular side. Asparagine 259 carries N-linked (GlcNAc...) asparagine glycosylation. A helical transmembrane segment spans residues 264-284 (LPLAYLISTIAYLALSLLWIV). Over 285-362 (KRSVEGFKIN…EETIRIYSLR (78 aa)) the chain is Cytoplasmic. The helical transmembrane segment at 363 to 383 (LFLNCIVLAVLGACFYAIYVA) threads the bilayer. Residues 384–404 (TVFSQEHMKKEIDKMVFGENL) are Extracellular-facing. A helical transmembrane segment spans residues 405–425 (LILYLPSIVITLANFITPMIF). The Cytoplasmic portion of the chain corresponds to 426-494 (AKIIRYEDYS…PCWETQVGQE (69 aa)). The helical transmembrane segment at 495–515 (MYKLMIFDFIIILAVTLFVDF) threads the bilayer. At 516–555 (PRKLLVTYCSSWKLIQCWGQQEFAIPDNVLGIVYGQTICW) the chain is on the extracellular side. A helical transmembrane segment spans residues 556 to 576 (IGAFFSPLLPAIATLKFIIIF). Over 577-601 (YVKEWSLLYTCRPSPRPFRASNSNF) the chain is Cytoplasmic. A helical membrane pass occupies residues 602 to 622 (FFLLVLLIGLCLAIIPLTISI). At 623–665 (SRIPSSKACGPFTNFNTTWEVIPKTVSTFPSSLQSFIHGVTSE) the chain is on the extracellular side. N-linked (GlcNAc...) asparagine glycosylation occurs at asparagine 638. The chain crosses the membrane as a helical span at residues 666 to 686 (AFAVPFFMIICLIMFYFIALA). Residues 687–723 (GAHKRVVIQLREQLSLESRDKRYLIQKLTEAQRDTRN) lie on the Cytoplasmic side of the membrane.

The protein belongs to the TMC family. In terms of assembly, interacts with PIEZO2; the interaction inhibits PIEZO2-conducted mechanically activated currents.

The protein localises to the membrane. In terms of biological role, acts as an inhibitory modulator of PIEZO2 mechanosensitive channel in dorsal root ganglion (DRG) neurons through physical interactions or interference with the interaction between Piezo2 and the cytoskeleton. The protein is Transmembrane channel-like protein 7 (TMC7) of Macaca fascicularis (Crab-eating macaque).